The primary structure comprises 798 residues: Exo-1,4-beta-xylosidase xlnD (798 aa).

The signal sequence occupies residues 1–20 (MPGAASIVAVLAALLPTALG). N-linked (GlcNAc...) asparagine glycosylation is found at Asn-23, Asn-87, Asn-142, and Asn-237. Asp-310 is a catalytic residue. Residues Asn-326, Asn-391, Asn-404, Asn-443, Asn-480, Asn-522, Asn-618, Asn-645, Asn-658, Asn-685, and Asn-707 are each glycosylated (N-linked (GlcNAc...) asparagine).

Belongs to the glycosyl hydrolase 3 family.

It localises to the secreted. It catalyses the reaction Hydrolysis of (1-&gt;4)-beta-D-xylans, to remove successive D-xylose residues from the non-reducing termini.. It functions in the pathway glycan degradation; xylan degradation. Xylan 1,4-beta-xylosidase involved in the hydrolysis of xylan, a major structural heterogeneous polysaccharide found in plant biomass representing the second most abundant polysaccharide in the biosphere, after cellulose. This Aspergillus oryzae (strain ATCC 42149 / RIB 40) (Yellow koji mold) protein is Exo-1,4-beta-xylosidase xlnD (xlnD).